The chain runs to 79 residues: Protein NOI4 (79 aa).

A disordered region spans residues 31–68; the sequence is KARDEKKTGGKPGSPGKSSEGHVKSGGGDPSKPQPKKW. Ser44 is modified (phosphoserine).

The protein belongs to the RIN4 family. Proteolytic cleaved by P.syringae pv tomato AvrRpt2 after Gly-12; this cleavage is critical for subsequent proteasome-dependent elimination.

The protein is Protein NOI4 of Arabidopsis thaliana (Mouse-ear cress).